Here is a 205-residue protein sequence, read N- to C-terminus: Small ribosomal subunit protein uS4 (205 aa).

Residues 26–46 form a disordered region; that stretch reads PVNRREYGPGQHGQRRKQKPS. The region spanning 94 to 157 is the S4 RNA-binding domain; the sequence is RRLDAVVYRL…KQLAIVLDAV (64 aa).

Belongs to the universal ribosomal protein uS4 family. Part of the 30S ribosomal subunit. Contacts protein S5. The interaction surface between S4 and S5 is involved in control of translational fidelity.

Functionally, one of the primary rRNA binding proteins, it binds directly to 16S rRNA where it nucleates assembly of the body of the 30S subunit. In terms of biological role, with S5 and S12 plays an important role in translational accuracy. The sequence is that of Small ribosomal subunit protein uS4 from Gluconobacter oxydans (strain 621H) (Gluconobacter suboxydans).